The chain runs to 144 residues: Maximins 5/H4 type 3 (144 aa).

A signal peptide spans 1–18; it reads MNFKYIVAVSFLIASAYA. 2 propeptides span residues 19 to 43 and 74 to 123; these read RSVQ…REIR and TAED…KEKR. Leucine 143 is subject to Leucine amide.

It belongs to the bombinin family. In terms of tissue distribution, expressed by the skin glands.

It is found in the secreted. Maximin-5 shows antibacterial activity against both Gram-positive and Gram-negative bacteria. The only exception is the resistance of E.coli. Also shows antimicrobial activity against fungi C.albicans, A.flavus and P.uticale. It has little hemolytic activity. It does not possess a significant cytotoxicity against tumor cell lines. It does not possess a significant anti-HIV activity. Its function is as follows. Maximin-H4 shows antibacterial activity against both Gram-positive and Gram-negative bacteria. It also shows antimicrobial activity against the fungus C.albicans. Shows strong hemolytic activity. The chain is Maximins 5/H4 type 3 from Bombina maxima (Giant fire-bellied toad).